The primary structure comprises 106 residues: MAVKIRLARFGAKKRPFYRIVVADSRAPRDGRFIEKIGQYDPMLPKDNKNRVVVKADRLKHWLSVGAQATERVLWFIKKGIVTLETEPKKTEKKKVENEKAQGQEA.

Belongs to the bacterial ribosomal protein bS16 family.

This chain is Small ribosomal subunit protein bS16, found in Wolbachia pipientis wMel.